Consider the following 34-residue polypeptide: Photosystem II reaction center protein M (34 aa).

The chain crosses the membrane as a helical span at residues 5-25; it reads ILAFIATALFILVPTAFLLII.

Belongs to the PsbM family. PSII is composed of 1 copy each of membrane proteins PsbA, PsbB, PsbC, PsbD, PsbE, PsbF, PsbH, PsbI, PsbJ, PsbK, PsbL, PsbM, PsbT, PsbX, PsbY, PsbZ, Psb30/Ycf12, at least 3 peripheral proteins of the oxygen-evolving complex and a large number of cofactors. It forms dimeric complexes.

It is found in the plastid. The protein resides in the chloroplast thylakoid membrane. One of the components of the core complex of photosystem II (PSII). PSII is a light-driven water:plastoquinone oxidoreductase that uses light energy to abstract electrons from H(2)O, generating O(2) and a proton gradient subsequently used for ATP formation. It consists of a core antenna complex that captures photons, and an electron transfer chain that converts photonic excitation into a charge separation. This subunit is found at the monomer-monomer interface. The sequence is that of Photosystem II reaction center protein M from Buxus microphylla (Littleleaf boxwood).